The sequence spans 356 residues: Photosystem II protein D1 4 (356 aa).

Transmembrane regions (helical) follow at residues 32–49, 121–136, and 145–159; these read YIGW…AATT, HFLI…FWEL, and WIAV…AATS. His-121 lines the chlorophyll a pocket. [CaMn4O5] cluster-binding residues include Asp-173 and Asp-192. A helical transmembrane segment spans residues 200–221; it reads FHMLGVAGVFGGALLSSLHGSL. Position 201 (His-201) interacts with chlorophyll a. A quinone is bound at residue His-218. Residues His-218 and His-276 each contribute to the Fe cation site. A helical membrane pass occupies residues 278–292; the sequence is LLAALPTIGIWFAAM. His-336 is a binding site for [CaMn4O5] cluster.

This sequence belongs to the reaction center PufL/M/PsbA/D family. In terms of assembly, PSII is composed of 1 copy each of membrane proteins PsbA, PsbB, PsbC, PsbD, PsbE, PsbF, PsbH, PsbI, PsbJ, PsbK, PsbL, PsbM, PsbT, PsbX, PsbY, PsbZ, Psb30/Ycf12, peripheral proteins PsbO, CyanoQ (PsbQ), PsbU, PsbV and a large number of cofactors. It forms dimeric complexes. It depends on The D1/D2 heterodimer binds P680, chlorophylls that are the primary electron donor of PSII, and subsequent electron acceptors. It shares a non-heme iron and each subunit binds pheophytin, quinone, additional chlorophylls, carotenoids and lipids. D1 provides most of the ligands for the Mn4-Ca-O5 cluster of the oxygen-evolving complex (OEC). There is also a Cl(-1) ion associated with D1 and D2, which is required for oxygen evolution. The PSII complex binds additional chlorophylls, carotenoids and specific lipids. as a cofactor. Post-translationally, tyr-164 forms a radical intermediate that is referred to as redox-active TyrZ, YZ or Y-Z.

It localises to the cellular thylakoid membrane. The enzyme catalyses 2 a plastoquinone + 4 hnu + 2 H2O = 2 a plastoquinol + O2. In terms of biological role, photosystem II (PSII) is a light-driven water:plastoquinone oxidoreductase that uses light energy to abstract electrons from H(2)O, generating O(2) and a proton gradient subsequently used for ATP formation. It consists of a core antenna complex that captures photons, and an electron transfer chain that converts photonic excitation into a charge separation. The D1/D2 (PsbA/PsbD) reaction center heterodimer binds P680, the primary electron donor of PSII as well as several subsequent electron acceptors. In Trichormus variabilis (strain ATCC 29413 / PCC 7937) (Anabaena variabilis), this protein is Photosystem II protein D1 4.